A 659-amino-acid chain; its full sequence is MAMESECNVVELIGGFFLKATLLVCQPRTGAIEGDGEEDRTFNISSAADAGVAEAVRAWTAYDGAQELPPLVIEMFLDLRRLGPQHTVVLKDQDGNPWNVCKGGKKSEIMLERWLVELDVGNEEARPEEPPNAAEIYKQLVLLFRYLYTLTQLLPANELYARLHGPSNQGEAAMPLINIGTRILDGSKPILSKGRVGLSRSIIATYTNVINETNVASHLEQKKITPISTGYGSLRITVSYRRDCNFDVNEVLDYEGNNCSSSSVVDTHTKPGVGPLSSLRRVSIHSNRSMSISPQTVYSGTVIPDPSPQRKSSSSRIQPFKAGSVGSGSLAIARNPSGSSAVATLRAQRSGSASISTHVADQAVGEPSSVGSGGSKYSSSFGKIRRQSSMRRSGSLELPAAKQAKPGERGSDELLDFVKMLEEKQELNVKKLYGTTTDISSSLVRFQSMKSNNDTLSEDLSMSYSLEPTHAPQVRYRSNSHSPIPSISPSVQYTSIPMRLSQSRNVSQTELASRKNSAERLKTLISSRTGSFSESRRQSNAGQEDILEDEDDEAEEILLSKSHLSNPTGTRLQSMSPQSLKSISSYNRAAVPFKPVSNFSCPTTMATPAHAKLHKASISSSPDNQSGLVKKDHEHSTMTGGDDDDDLLFFMSDMNLSSQ.

6 disordered regions span residues 260 to 280, 295 to 320, 353 to 409, 525 to 551, 560 to 579, and 612 to 644; these read SSSS…SSLR, QTVY…IQPF, ASIS…PGER, ISSR…EDED, SKSH…SPQS, and KLHK…GDDD. Over residues 364–382 the composition is skewed to low complexity; sequence VGEPSSVGSGGSKYSSSFG. Polar residues-rich tracts occupy residues 525 to 542, 562 to 579, and 617 to 627; these read ISSR…SNAG, SHLS…SPQS, and SISSSPDNQSG.

This sequence belongs to the ATG13 family. Fungi subfamily. As to quaternary structure, interacts with ATG1 to form the ATG1-ATG13 kinase complex.

The protein resides in the cytoplasm. It is found in the preautophagosomal structure. Activates the ATG1 kinase in a nutritional condition dependent manner through the TOR pathway, leading to autophagy. Also involved in cytoplasm to vacuole transport (Cvt) and more specifically in Cvt vesicle formation. Seems to play a role in the switching machinery regulating the conversion between the Cvt pathway and autophagy. Finally, ATG13 is also required for glycogen storage during stationary phase. This Eremothecium gossypii (strain ATCC 10895 / CBS 109.51 / FGSC 9923 / NRRL Y-1056) (Yeast) protein is Autophagy-related protein 13 (ATG13).